The following is a 130-amino-acid chain: Holo-[acyl-carrier-protein] synthase (130 aa).

Residues D9 and E58 each contribute to the Mg(2+) site.

This sequence belongs to the P-Pant transferase superfamily. AcpS family. Mg(2+) is required as a cofactor.

It is found in the cytoplasm. It catalyses the reaction apo-[ACP] + CoA = holo-[ACP] + adenosine 3',5'-bisphosphate + H(+). Transfers the 4'-phosphopantetheine moiety from coenzyme A to a Ser of acyl-carrier-protein. In Mycobacterium bovis (strain ATCC BAA-935 / AF2122/97), this protein is Holo-[acyl-carrier-protein] synthase.